We begin with the raw amino-acid sequence, 138 residues long: ATP synthase epsilon chain 2 (138 aa).

The protein belongs to the ATPase epsilon chain family. In terms of assembly, F-type ATPases have 2 components, CF(1) - the catalytic core - and CF(0) - the membrane proton channel. CF(1) has five subunits: alpha(3), beta(3), gamma(1), delta(1), epsilon(1). CF(0) has three main subunits: a, b and c.

It is found in the cell inner membrane. In terms of biological role, produces ATP from ADP in the presence of a proton gradient across the membrane. The polypeptide is ATP synthase epsilon chain 2 (Syntrophotalea carbinolica (strain DSM 2380 / NBRC 103641 / GraBd1) (Pelobacter carbinolicus)).